A 320-amino-acid polypeptide reads, in one-letter code: MKLAFILDPLDSIKIGKDSSYAMMREAAVRHHQLYTLQQNDLAWKDHQVIGFARPLTLLDPPEGDHRWYEEGAIEEIPLSGFDAVLMRKDPPFDTEYIYSTYLLELAERQGAYVVNSPRGIRDHNEKLAITEFPRFTPPSLVTSQEQLILEFLAEHEDIILKPLDGMGGAGIFRIQNTDHNIGVIIETLTRYGTRTIMAQRFLPEIREGDKRILLIAGRPVDYALARIPKPGETRGNLAAGGTGVARPLSARDREIAEELGQILYARGLMLVGLDVIGNHLTEINVTSPTGMREISDQTGTNVAGLMIDALEQNIARKNR.

In terms of domain architecture, ATP-grasp spans 127–312 (KLAITEFPRF…VAGLMIDALE (186 aa)). 153–209 (LAEHEDIILKPLDGMGGAGIFRIQNTDHNIGVIIETLTRYGTRTIMAQRFLPEIREG) lines the ATP pocket. Positions 283 and 285 each coordinate Mg(2+).

Belongs to the prokaryotic GSH synthase family. Mg(2+) is required as a cofactor. Requires Mn(2+) as cofactor.

The enzyme catalyses gamma-L-glutamyl-L-cysteine + glycine + ATP = glutathione + ADP + phosphate + H(+). It participates in sulfur metabolism; glutathione biosynthesis; glutathione from L-cysteine and L-glutamate: step 2/2. This chain is Glutathione synthetase, found in Nitrosomonas europaea (strain ATCC 19718 / CIP 103999 / KCTC 2705 / NBRC 14298).